The chain runs to 658 residues: Aminopeptidase P1 (658 aa).

A peptide is bound by residues Arg-69 and His-436. Positions 456, 467, and 530 each coordinate Mn(2+). Residues His-530, His-539, and Glu-563 each contribute to the a peptide site. The Mn(2+) site is built by Glu-563 and Glu-577.

It belongs to the peptidase M24B family. As to quaternary structure, homodimer. Interacts with N-1-naphthylphthalamic acid (NPA). Interacts with NBCL/BOP2/COCH around the plasma membrane and in the nucleus; this interaction disturbs its regulation of the nuclear transcription factor Y subunit (NF-YA1). It depends on Mn(2+) as a cofactor. The cofactor is Zn(2+). As to expression, expressed at similar levels in shoot apical meristems (SAM), root meristems (RM), root apical meristems (RAM), roots and leaves and, to a slightly lesser degree, in root nodules.

Its subcellular location is the nucleus. It is found in the cytoplasm. The protein resides in the cell membrane. The protein localises to the microsome membrane. It carries out the reaction Release of any N-terminal amino acid, including proline, that is linked to proline, even from a dipeptide or tripeptide.. Functionally, catalyzes the removal of a penultimate prolyl residue from the N-termini of peptides, such as Arg-Pro-Pro. Aminopeptidase that binds to the auxin transport inhibitor N-1-naphthylphthalamic acid (NPA). May play a negative role in the regulation of PIN auxin transport proteins. Involved in the coordination of the symbiotic nodule developmental program; prevents the formation of root nodules by regulating the expression of the nuclear transcription factor Y subunit (NF-YA1), a key nodulin. The chain is Aminopeptidase P1 from Lotus japonicus (Lotus corniculatus var. japonicus).